The following is a 550-amino-acid chain: Centrosomal and chromosomal factor (550 aa).

Coiled-coil stretches lie at residues 20–44 (SALS…QQHH), 105–126 (VANS…QQQQ), and 239–274 (ATSA…QQAH). Disordered stretches follow at residues 21–145 (ALSA…KDYS), 208–320 (LSSG…HAAN), 361–380 (SHYA…RDAM), and 392–465 (SGKL…SASV). Low complexity-rich tracts occupy residues 24–71 (ALQQ…QQQQ), 81–136 (ANTS…NAAP), and 221–320 (AAVA…HAAN). 2 stretches are compositionally biased toward low complexity: residues 396-412 (QQSQ…QQHC) and 450-462 (SATP…SGGS).

In terms of assembly, homodimer. Interacts with esc, Trl, E(z), scm and ph-p in vitro. Found in vivo in an esc-containing complex, which may be the Esc/E(z) complex. Also found in vivo in a Pc-containing complex that may be the PRC1 complex, but does not interact with Pc directly. Interacts with cyclin CycG.

The protein localises to the nucleus. It is found in the cytoplasm. It localises to the cytoskeleton. Its subcellular location is the microtubule organizing center. The protein resides in the centrosome. The protein localises to the chromosome. Functionally, essential protein required for proper condensation of mitotic chromosomes and progression through mitosis. Binds to specific polytene chromosome sites, many of which are shared with the posterior sex combs (Psc) protein. Involved in maintaining Abd-B repression outside its normal expression domain. The protein is Centrosomal and chromosomal factor (corto) of Drosophila melanogaster (Fruit fly).